The primary structure comprises 184 residues: Calmodulin-related protein (184 aa).

EF-hand domains follow at residues 8 to 43, 44 to 79, 81 to 116, and 117 to 152; these read DQISEFKEAFSLFDKDGDGCITTKELGTVMRSLGQN, PTEAELQDMINEVDADGNGTIDFPEFLNLMARKMKD, DSEEELKEAFRVFDKDQNGFISAAELRHVMTNLGEK, and LTDEEVDEMIREADVDGDGQINYEEFVKVMMANRRR. 14 residues coordinate Ca(2+): D21, D23, D25, C27, E32, D57, D59, N61, T63, E68, D94, D96, N98, and E105. K116 bears the N6,N6,N6-trimethyllysine mark. D130, D132, D134, Q136, and E141 together coordinate Ca(2+). Residues 156–184 form a disordered region; the sequence is EESKRSVNSNISRSNNGRKVRKRDRCTIL. Residues 161–170 are compositionally biased toward low complexity; that stretch reads SVNSNISRSN. Residues 171–184 are compositionally biased toward basic residues; the sequence is NGRKVRKRDRCTIL.

This sequence belongs to the calmodulin family.

Calmodulin mediates the control of a large number of enzymes, ion channels and other proteins by Ca(2+). Among the enzymes to be stimulated by the calmodulin-Ca(2+) complex are a number of protein kinases and phosphatases. This Petunia hybrida (Petunia) protein is Calmodulin-related protein (CAM53).